A 381-amino-acid chain; its full sequence is PqqA peptide cyclase (381 aa).

The region spanning 12–228 (VGPPLWLLAE…AEYRQRLAAE (217 aa)) is the Radical SAM core domain. [4Fe-4S] cluster-binding residues include Cys26, Cys30, and Cys33.

Belongs to the radical SAM superfamily. PqqE family. As to quaternary structure, interacts with PqqD. The interaction is necessary for activity of PqqE. [4Fe-4S] cluster is required as a cofactor.

The catalysed reaction is [PQQ precursor protein] + S-adenosyl-L-methionine = E-Y cross-linked-[PQQ precursor protein] + 5'-deoxyadenosine + L-methionine + H(+). It functions in the pathway cofactor biosynthesis; pyrroloquinoline quinone biosynthesis. Catalyzes the cross-linking of a glutamate residue and a tyrosine residue in the PqqA protein as part of the biosynthesis of pyrroloquinoline quinone (PQQ). In Pseudomonas aeruginosa (strain LESB58), this protein is PqqA peptide cyclase.